We begin with the raw amino-acid sequence, 268 residues long: Cytochrome b-c1 complex subunit Rieske-3, mitochondrial (268 aa).

Residues 1 to 56 constitute a mitochondrion transit peptide; sequence MLRIAGRKLSSSAATRSSSAFFTRNPFTFTDDSSSPARSPSPASLASQFLDQFRGF. Over 57-105 the chain is Mitochondrial matrix; the sequence is SSNSVSPAHQTGLVSDLPATVAAIKNPSSKIVYDDSNHERYPPGDPSKR. The helical transmembrane segment at 106 to 128 threads the bilayer; the sequence is AFAYFVLTGGRFVYASLVRLLIL. The Mitochondrial intermembrane portion of the chain corresponds to 129 to 268; the sequence is KFVLSMSASK…FMEENKLLIG (140 aa). One can recognise a Rieske domain in the interval 178 to 266; the sequence is INLANSVDLG…YSFMEENKLL (89 aa). 4 residues coordinate [2Fe-2S] cluster: C211, H213, C230, and H233. Cysteines 216 and 232 form a disulfide.

Belongs to the Rieske iron-sulfur protein family. In terms of assembly, component of the ubiquinol-cytochrome c oxidoreductase (cytochrome b-c1 complex, complex III, CIII), a multisubunit enzyme composed of 3 respiratory subunits cytochrome b, cytochrome c1 and Rieske protein, 2 core protein subunits, and several low-molecular weight protein subunits. The complex exists as an obligatory dimer and forms supercomplexes (SCs) in the inner mitochondrial membrane with cytochrome c oxidase (complex IV, CIV). [2Fe-2S] cluster serves as cofactor. In terms of tissue distribution, high levels are seen in the flowers while a low level expression is seen in the roots, leaves and stems.

The protein resides in the mitochondrion inner membrane. It catalyses the reaction a quinol + 2 Fe(III)-[cytochrome c](out) = a quinone + 2 Fe(II)-[cytochrome c](out) + 2 H(+)(out). Its function is as follows. Component of the ubiquinol-cytochrome c oxidoreductase, a multisubunit transmembrane complex that is part of the mitochondrial electron transport chain which drives oxidative phosphorylation. The respiratory chain contains 3 multisubunit complexes succinate dehydrogenase (complex II, CII), ubiquinol-cytochrome c oxidoreductase (cytochrome b-c1 complex, complex III, CIII) and cytochrome c oxidase (complex IV, CIV), that cooperate to transfer electrons derived from NADH and succinate to molecular oxygen, creating an electrochemical gradient over the inner membrane that drives transmembrane transport and the ATP synthase. The cytochrome b-c1 complex catalyzes electron transfer from ubiquinol to cytochrome c, linking this redox reaction to translocation of protons across the mitochondrial inner membrane, with protons being carried across the membrane as hydrogens on the quinol. In the process called Q cycle, 2 protons are consumed from the matrix, 4 protons are released into the intermembrane space and 2 electrons are passed to cytochrome c. The Rieske protein is a catalytic core subunit containing a [2Fe-2S] iron-sulfur cluster. It cycles between 2 conformational states during catalysis to transfer electrons from the quinol bound in the Q(0) site in cytochrome b to cytochrome c1. This chain is Cytochrome b-c1 complex subunit Rieske-3, mitochondrial, found in Nicotiana tabacum (Common tobacco).